Here is a 78-residue protein sequence, read N- to C-terminus: Translation initiation factor IF-1, plastid (78 aa).

Positions 1 to 72 constitute an S1-like domain; that stretch reads MKKQDLIDME…TKGRITYRLR (72 aa).

The protein belongs to the IF-1 family. Component of the 30S ribosomal translation pre-initiation complex which assembles on the 30S ribosome in the order IF-2 and IF-3, IF-1 and N-formylmethionyl-tRNA(fMet); mRNA recruitment can occur at any time during PIC assembly.

It is found in the plastid. In terms of biological role, one of the essential components for the initiation of protein synthesis. Stabilizes the binding of IF-2 and IF-3 on the 30S subunit to which N-formylmethionyl-tRNA(fMet) subsequently binds. Helps modulate mRNA selection, yielding the 30S pre-initiation complex (PIC). Upon addition of the 50S ribosomal subunit IF-1, IF-2 and IF-3 are released leaving the mature 70S translation initiation complex. The protein is Translation initiation factor IF-1, plastid of Aneura mirabilis (Parasitic liverwort).